Here is a 215-residue protein sequence, read N- to C-terminus: High frequency lysogenization protein HflD homolog (215 aa).

This sequence belongs to the HflD family.

The protein localises to the cytoplasm. It is found in the cell inner membrane. This Haemophilus ducreyi (strain 35000HP / ATCC 700724) protein is High frequency lysogenization protein HflD homolog.